The primary structure comprises 198 residues: Small ribosomal subunit protein uS11 (198 aa).

2 stretches are compositionally biased toward low complexity: residues 1–11 (MSGTEAGAGEP) and 19–58 (EAAQ…TAQP). 2 disordered regions span residues 1–72 (MSGT…TPAD) and 178–198 (DVTP…GRRV). A compositionally biased stretch (basic residues) spans 187–198 (TRKKGGKRGRRV).

Belongs to the universal ribosomal protein uS11 family. Part of the 30S ribosomal subunit.

In terms of biological role, located on the platform of the 30S subunit. This is Small ribosomal subunit protein uS11 from Cenarchaeum symbiosum (strain A).